A 412-amino-acid polypeptide reads, in one-letter code: Serine hydroxymethyltransferase (412 aa).

(6S)-5,6,7,8-tetrahydrofolate is bound by residues L117 and 121-123 (GHL). K226 carries the post-translational modification N6-(pyridoxal phosphate)lysine. 349-351 (SPF) lines the (6S)-5,6,7,8-tetrahydrofolate pocket.

The protein belongs to the SHMT family. Homodimer. Requires pyridoxal 5'-phosphate as cofactor.

The protein localises to the cytoplasm. It catalyses the reaction (6R)-5,10-methylene-5,6,7,8-tetrahydrofolate + glycine + H2O = (6S)-5,6,7,8-tetrahydrofolate + L-serine. It functions in the pathway one-carbon metabolism; tetrahydrofolate interconversion. The protein operates within amino-acid biosynthesis; glycine biosynthesis; glycine from L-serine: step 1/1. Its function is as follows. Catalyzes the reversible interconversion of serine and glycine with tetrahydrofolate (THF) serving as the one-carbon carrier. This reaction serves as the major source of one-carbon groups required for the biosynthesis of purines, thymidylate, methionine, and other important biomolecules. Also exhibits THF-independent aldolase activity toward beta-hydroxyamino acids, producing glycine and aldehydes, via a retro-aldol mechanism. The polypeptide is Serine hydroxymethyltransferase (Nitratidesulfovibrio vulgaris (strain ATCC 29579 / DSM 644 / CCUG 34227 / NCIMB 8303 / VKM B-1760 / Hildenborough) (Desulfovibrio vulgaris)).